The chain runs to 278 residues: Mediator of RNA polymerase II transcription subunit 18 (278 aa).

It belongs to the Mediator complex subunit 18 family. As to quaternary structure, component of the Mediator complex.

The protein localises to the nucleus. Functionally, component of the Mediator complex, a coactivator involved in the regulated transcription of nearly all RNA polymerase II-dependent genes. Mediator functions as a bridge to convey information from gene-specific regulatory proteins to the basal RNA polymerase II transcription machinery. Mediator is recruited to promoters by direct interactions with regulatory proteins and serves as a scaffold for the assembly of a functional preinitiation complex with RNA polymerase II and the general transcription factors. The protein is Mediator of RNA polymerase II transcription subunit 18 (srb5) of Aspergillus clavatus (strain ATCC 1007 / CBS 513.65 / DSM 816 / NCTC 3887 / NRRL 1 / QM 1276 / 107).